A 185-amino-acid polypeptide reads, in one-letter code: Ribose 1,5-bisphosphate phosphokinase PhnN (185 aa).

Position 10–17 (10–17) interacts with ATP; it reads GPSGSGKD.

Belongs to the ribose 1,5-bisphosphokinase family.

It catalyses the reaction alpha-D-ribose 1,5-bisphosphate + ATP = 5-phospho-alpha-D-ribose 1-diphosphate + ADP. It functions in the pathway metabolic intermediate biosynthesis; 5-phospho-alpha-D-ribose 1-diphosphate biosynthesis; 5-phospho-alpha-D-ribose 1-diphosphate from D-ribose 5-phosphate (route II): step 3/3. In terms of biological role, catalyzes the phosphorylation of ribose 1,5-bisphosphate to 5-phospho-D-ribosyl alpha-1-diphosphate (PRPP). Accepts ATP but not GTP as a phosphoryl donor, and uses ribose 1,5-bisphosphate but not ribose, ribose 1-phosphate, or ribose 5-phosphate as a phosphoryl acceptor. The polypeptide is Ribose 1,5-bisphosphate phosphokinase PhnN (phnN) (Escherichia coli (strain K12)).